A 533-amino-acid chain; its full sequence is 2-isopropylmalate synthase (533 aa).

The Pyruvate carboxyltransferase domain maps to 8 to 270; sequence VIIFDTTLRD…YFNPFLGRPA (263 aa). Positions 17, 209, 211, and 245 each coordinate Mn(2+). The interval 409-533 is regulatory domain; sequence RLELVQVSCG…KEKTPEMLQV (125 aa).

Belongs to the alpha-IPM synthase/homocitrate synthase family. LeuA type 1 subfamily. In terms of assembly, homodimer. Mn(2+) is required as a cofactor.

It is found in the cytoplasm. It carries out the reaction 3-methyl-2-oxobutanoate + acetyl-CoA + H2O = (2S)-2-isopropylmalate + CoA + H(+). It functions in the pathway amino-acid biosynthesis; L-leucine biosynthesis; L-leucine from 3-methyl-2-oxobutanoate: step 1/4. In terms of biological role, catalyzes the condensation of the acetyl group of acetyl-CoA with 3-methyl-2-oxobutanoate (2-ketoisovalerate) to form 3-carboxy-3-hydroxy-4-methylpentanoate (2-isopropylmalate). The chain is 2-isopropylmalate synthase from Microcystis aeruginosa.